Reading from the N-terminus, the 91-residue chain is Acylphosphatase (91 aa).

The Acylphosphatase-like domain occupies 3-89 (TLLVRISGKV…PDQPGFSQKP (87 aa)). Residues R18 and N36 contribute to the active site.

It belongs to the acylphosphatase family.

The enzyme catalyses an acyl phosphate + H2O = a carboxylate + phosphate + H(+). This chain is Acylphosphatase (acyP), found in Rhodospirillum rubrum (strain ATCC 11170 / ATH 1.1.1 / DSM 467 / LMG 4362 / NCIMB 8255 / S1).